The primary structure comprises 430 residues: Adenylosuccinate synthetase (430 aa).

GTP is bound by residues 12–18 (GDEGKGK) and 40–42 (GHT). D13 acts as the Proton acceptor in catalysis. Mg(2+) is bound by residues D13 and G40. IMP is bound by residues 13–16 (DEGK), 38–41 (NAGH), T130, R144, Q224, T239, and R303. The Proton donor role is filled by H41. Residue 299–305 (TVTGRKR) coordinates substrate. GTP-binding positions include R305, 331-333 (KLD), and 413-415 (STS).

The protein belongs to the adenylosuccinate synthetase family. As to quaternary structure, homodimer. Mg(2+) is required as a cofactor.

The protein resides in the cytoplasm. It catalyses the reaction IMP + L-aspartate + GTP = N(6)-(1,2-dicarboxyethyl)-AMP + GDP + phosphate + 2 H(+). It participates in purine metabolism; AMP biosynthesis via de novo pathway; AMP from IMP: step 1/2. Functionally, plays an important role in the de novo pathway of purine nucleotide biosynthesis. Catalyzes the first committed step in the biosynthesis of AMP from IMP. The sequence is that of Adenylosuccinate synthetase from Cereibacter sphaeroides (strain ATCC 17025 / ATH 2.4.3) (Rhodobacter sphaeroides).